A 499-amino-acid chain; its full sequence is Tyrosine-protein kinase Blk (499 aa).

The disordered stretch occupies residues 1–34; sequence MGLLSSKRQVSEKGKGWSPVKIRTQDKAPPPLPP. The N-myristoyl glycine moiety is linked to residue Gly2. One can recognise an SH3 domain in the interval 52–112; that stretch reads EEERFVVALF…PSNFVAPVET (61 aa). An SH2 domain is found at 118-214; the sequence is WFFRTISRKD…GLCQKLTLPC (97 aa). Residues 235–488 enclose the Protein kinase domain; it reads LKLVRKLGSG…FLQSVLEDFY (254 aa). ATP contacts are provided by residues 241-249 and Lys263; that span reads LGSGQFGEV. Asp354 serves as the catalytic Proton acceptor. A Phosphotyrosine; by autocatalysis modification is found at Tyr383.

This sequence belongs to the protein kinase superfamily. Tyr protein kinase family. SRC subfamily. In terms of assembly, interacts with CBL (via SH2 domain). Interacts with CD79A and CD79B (via SH2 domain). Post-translationally, phosphorylated on tyrosine residues after antibody-mediated surface engagement of the B-cell antigen receptor (BCR). In terms of processing, ubiquitination of activated BLK by the UBE3A ubiquitin protein ligase leads to its degradation by the ubiquitin-proteasome pathway. As to expression, expressed in immature Vgamma2 gamma-delta T-cells (at protein level). Expressed in the B-cell lineage.

The protein resides in the cell membrane. It carries out the reaction L-tyrosyl-[protein] + ATP = O-phospho-L-tyrosyl-[protein] + ADP + H(+). With respect to regulation, antibody-mediated surface engagement of the B-cell antigen receptor (BCR) which results in the phosphorylation of BLK on tyrosine residues, stimulates the enzymatic activity. Functionally, non-receptor tyrosine kinase involved in B-lymphocyte development, differentiation and signaling. B-cell receptor (BCR) signaling requires a tight regulation of several protein tyrosine kinases and phosphatases, and associated coreceptors. Binding of antigen to the B-cell antigen receptor (BCR) triggers signaling that ultimately leads to B-cell activation. Signaling through BLK plays an important role in transmitting signals through surface immunoglobulins and supports the pro-B to pre-B transition, as well as the signaling for growth arrest and apoptosis downstream of B-cell receptor. Specifically binds and phosphorylates CD79A at 'Tyr-188'and 'Tyr-199', as well as CD79B at 'Tyr-196' and 'Tyr-207'. Also phosphorylates the immunoglobulin G receptor FCGR2. With FYN and LYN, plays an essential role in pre-B-cell receptor (pre-BCR)-mediated NF-kappa-B activation. Also contributes to BTK activation by indirectly stimulating BTK intramolecular autophosphorylation. In pancreatic islets, acts as a modulator of beta-cells function through the up-regulation of PDX1 and NKX6-1 and consequent stimulation of insulin secretion in response to glucose. Phosphorylates CGAS, promoting retention of CGAS in the cytosol. The protein is Tyrosine-protein kinase Blk (Blk) of Mus musculus (Mouse).